A 963-amino-acid polypeptide reads, in one-letter code: Protocadherin alpha-C1 (963 aa).

A signal peptide spans 1-18 (MVGCGVAVLCLWVSCGAA). 5 Cadherin domains span residues 19-124 (AGQL…SPLF), 125-233 (PAGD…APVF), 234-340 (ERSV…APEL), 349-445 (VPED…TPNF), and 446-555 (PQPQ…YPVI). The Extracellular portion of the chain corresponds to 19 to 683 (AGQLEYSVPE…GGQLSAQNLY (665 aa)). N-linked (GlcNAc...) asparagine glycosylation occurs at Asn38. N-linked (GlcNAc...) asparagine glycosylation is found at Asn248 and Asn274. An N-linked (GlcNAc...) asparagine glycan is attached at Asn562. Residues 570-667 (VPRSARTGHL…NSVPQLLPDF (98 aa)) form the Cadherin 6 domain. A helical transmembrane segment spans residues 684-704 (LVIALACISFLFLGCLLFFVC). At 705 to 963 (TKLHQSPGCC…GNSTTDNSDQ (259 aa)) the chain is on the cytoplasmic side. 4 PXXP repeats span residues 812–815 (PRQP), 845–848 (PGGP), 886–889 (PGNP), and 904–907 (PGSP). A 4 X 4 AA repeats of P-X-X-P region spans residues 812–907 (PRQPNPDWRY…PDKFIIPGSP (96 aa)). Positions 844-963 (GPGGPDQQWP…GNSTTDNSDQ (120 aa)) are disordered. Over residues 922 to 936 (DKSDFITFGKKEETK) the composition is skewed to basic and acidic residues.

It is found in the cell membrane. Its function is as follows. Potential calcium-dependent cell-adhesion protein. May be involved in the establishment and maintenance of specific neuronal connections in the brain. This chain is Protocadherin alpha-C1 (PCDHAC1), found in Homo sapiens (Human).